We begin with the raw amino-acid sequence, 338 residues long: POU domain, class 4, transcription factor 3 (338 aa).

Residues R56 to I65 carry the POU-IV box motif. One can recognise a POU-specific domain in the interval D179–E256. Residues R274 to K333 constitute a DNA-binding region (homeobox).

This sequence belongs to the POU transcription factor family. Class-4 subfamily. In terms of assembly, interacts with ISL1. In terms of tissue distribution, brain. Seems to be specific to the retina.

It localises to the nucleus. The protein resides in the cytoplasm. In terms of biological role, acts as a transcriptional activator. Acts by binding to sequences related to the consensus octamer motif 5'-ATGCAAAT-3' in the regulatory regions of its target genes. Involved in the auditory system development, required for terminal differentiation of hair cells in the inner ear. The sequence is that of POU domain, class 4, transcription factor 3 (POU4F3) from Homo sapiens (Human).